The following is a 252-amino-acid chain: Serine/threonine phosphatase stp (252 aa).

Residues 1 to 18 (MHAEFRTDRGRIRHHNED) are compositionally biased toward basic and acidic residues. The tract at residues 1–23 (MHAEFRTDRGRIRHHNEDNGGVF) is disordered. Residues 2-242 (HAEFRTDRGR…DNITVLLVER (241 aa)) form the PPM-type phosphatase domain. Mn(2+)-binding residues include Asp36, Gly37, Asp194, and Asp233.

Belongs to the PP2C family. Requires Mn(2+) as cofactor.

Its subcellular location is the cytoplasm. The protein localises to the membrane. It catalyses the reaction O-phospho-L-seryl-[protein] + H2O = L-seryl-[protein] + phosphate. The catalysed reaction is O-phospho-L-threonyl-[protein] + H2O = L-threonyl-[protein] + phosphate. Its function is as follows. Protein phosphatase that dephosphorylates EF-Tu. This chain is Serine/threonine phosphatase stp (stp), found in Listeria welshimeri serovar 6b (strain ATCC 35897 / DSM 20650 / CCUG 15529 / CIP 8149 / NCTC 11857 / SLCC 5334 / V8).